Consider the following 463-residue polypeptide: MENTLVKSLYRDTDKYAGQTVQVSGWIRNLRDSKAFGFIELNDGSFFKSVQIVFDTELDNFKEIAKLPLSSSVKVEGKVIVTPGAKQPFEIKAEKIDIEGLSDSDYPLQKKRHTFEYLRTIAHLRPRTNAFSATFRVRSIAAFAIHQFFQERGFVHVHTPIITGSDTEGAGEMFRVTTQDLNNVPKGEDGQVDESKDFFGKETNLTVSGQLNAEAYALAFRDVYTFGPTFRAENSNTTRHAAEFWMVEPEIAFAELGDVMNLTEDMLKYAMKYVLEHAPEEMEFFNSFVDKTVLERMNNVINSDFGRITYTEAIKVLQESGADFKYPVEWGIDLQTEHERYLSEEIFKRPVFVTDYPKDIKAFYMRLNDDGKTVAATDLLVPGIGELIGGSQREERMDVLVDRIKELGMNEEDYWWYLELRKYGGTKHAGFGLGFERFLMYITGMANIRDVIPFPRTPGSSEF.

Belongs to the class-II aminoacyl-tRNA synthetase family. In terms of assembly, homodimer.

The protein resides in the cytoplasm. The enzyme catalyses tRNA(Asn) + L-asparagine + ATP = L-asparaginyl-tRNA(Asn) + AMP + diphosphate + H(+). The sequence is that of Asparagine--tRNA ligase from Bacillus cereus (strain ATCC 10987 / NRS 248).